The following is a 160-amino-acid chain: Cytochrome b6-f complex subunit 4 (160 aa).

Transmembrane regions (helical) follow at residues Leu-36–Val-56, Leu-95–Glu-115, and Thr-131–Ile-151.

Belongs to the cytochrome b family. PetD subfamily. As to quaternary structure, the 4 large subunits of the cytochrome b6-f complex are cytochrome b6, subunit IV (17 kDa polypeptide, petD), cytochrome f and the Rieske protein, while the 4 small subunits are petG, petL, petM and petN. The complex functions as a dimer.

It localises to the plastid. It is found in the chloroplast thylakoid membrane. Component of the cytochrome b6-f complex, which mediates electron transfer between photosystem II (PSII) and photosystem I (PSI), cyclic electron flow around PSI, and state transitions. The polypeptide is Cytochrome b6-f complex subunit 4 (Psilotum nudum (Whisk fern)).